The following is a 343-amino-acid chain: Protein RecA (343 aa).

66-73 is a binding site for ATP; it reads GPESSGKT.

The protein belongs to the RecA family.

The protein localises to the cytoplasm. Functionally, can catalyze the hydrolysis of ATP in the presence of single-stranded DNA, the ATP-dependent uptake of single-stranded DNA by duplex DNA, and the ATP-dependent hybridization of homologous single-stranded DNAs. It interacts with LexA causing its activation and leading to its autocatalytic cleavage. This Nitrosomonas europaea (strain ATCC 19718 / CIP 103999 / KCTC 2705 / NBRC 14298) protein is Protein RecA.